The following is a 575-amino-acid chain: Sulfite reductase [NADPH] hemoprotein beta-component (575 aa).

Residues cysteine 438, cysteine 444, cysteine 484, and cysteine 488 each coordinate [4Fe-4S] cluster. Cysteine 488 is a binding site for siroheme.

It belongs to the nitrite and sulfite reductase 4Fe-4S domain family. Alpha(8)-beta(8). The alpha component is a flavoprotein, the beta component is a hemoprotein. Siroheme serves as cofactor. Requires [4Fe-4S] cluster as cofactor.

It catalyses the reaction hydrogen sulfide + 3 NADP(+) + 3 H2O = sulfite + 3 NADPH + 4 H(+). It participates in sulfur metabolism; hydrogen sulfide biosynthesis; hydrogen sulfide from sulfite (NADPH route): step 1/1. In terms of biological role, component of the sulfite reductase complex that catalyzes the 6-electron reduction of sulfite to sulfide. This is one of several activities required for the biosynthesis of L-cysteine from sulfate. The chain is Sulfite reductase [NADPH] hemoprotein beta-component from Vibrio atlanticus (strain LGP32) (Vibrio splendidus (strain Mel32)).